A 186-amino-acid chain; its full sequence is ATP synthase subunit delta (186 aa).

This sequence belongs to the ATPase delta chain family. F-type ATPases have 2 components, F(1) - the catalytic core - and F(0) - the membrane proton channel. F(1) has five subunits: alpha(3), beta(3), gamma(1), delta(1), epsilon(1). CF(0) has four main subunits: a(1), b(1), b'(1) and c(10-14). The alpha and beta chains form an alternating ring which encloses part of the gamma chain. F(1) is attached to F(0) by a central stalk formed by the gamma and epsilon chains, while a peripheral stalk is formed by the delta, b and b' chains.

The protein localises to the cell inner membrane. Functionally, f(1)F(0) ATP synthase produces ATP from ADP in the presence of a proton or sodium gradient. F-type ATPases consist of two structural domains, F(1) containing the extramembraneous catalytic core and F(0) containing the membrane proton channel, linked together by a central stalk and a peripheral stalk. During catalysis, ATP synthesis in the catalytic domain of F(1) is coupled via a rotary mechanism of the central stalk subunits to proton translocation. This protein is part of the stalk that links CF(0) to CF(1). It either transmits conformational changes from CF(0) to CF(1) or is implicated in proton conduction. In Rhodopseudomonas palustris (strain BisB18), this protein is ATP synthase subunit delta.